The following is a 525-amino-acid chain: GMP synthase [glutamine-hydrolyzing] (525 aa).

The Glutamine amidotransferase type-1 domain maps to 8-207 (KILILDFGSQ…ALDICGCAAN (200 aa)). Residue Cys-85 is the Nucleophile of the active site. Catalysis depends on residues His-181 and Glu-183. Residues 208 to 400 (WKPSSIIEDA…LGLPYNMLYR (193 aa)) enclose the GMPS ATP-PPase domain. An ATP-binding site is contributed by 235-241 (SGGVDSS).

Homodimer.

It catalyses the reaction XMP + L-glutamine + ATP + H2O = GMP + L-glutamate + AMP + diphosphate + 2 H(+). It functions in the pathway purine metabolism; GMP biosynthesis; GMP from XMP (L-Gln route): step 1/1. Catalyzes the synthesis of GMP from XMP. The chain is GMP synthase [glutamine-hydrolyzing] from Shewanella sp. (strain MR-7).